Here is a 299-residue protein sequence, read N- to C-terminus: 33 kDa chaperonin (299 aa).

2 disulfides stabilise this stretch: C234–C236 and C268–C271.

This sequence belongs to the HSP33 family. Under oxidizing conditions two disulfide bonds are formed involving the reactive cysteines. Under reducing conditions zinc is bound to the reactive cysteines and the protein is inactive.

It localises to the cytoplasm. Redox regulated molecular chaperone. Protects both thermally unfolding and oxidatively damaged proteins from irreversible aggregation. Plays an important role in the bacterial defense system toward oxidative stress. The polypeptide is 33 kDa chaperonin (Pseudomonas putida (strain ATCC 700007 / DSM 6899 / JCM 31910 / BCRC 17059 / LMG 24140 / F1)).